The chain runs to 247 residues: Fibroblast growth factor 14 (247 aa).

Disordered regions lie at residues 1-38 (MAAA…KNRG) and 216-247 (ETVP…CKTT). Positions 15-25 (QAREQHWDRPS) are enriched in basic and acidic residues.

This sequence belongs to the heparin-binding growth factors family. As to quaternary structure, interacts with SCN8A.

The protein resides in the nucleus. In terms of biological role, probably involved in nervous system development and function. This is Fibroblast growth factor 14 (Fgf14) from Rattus norvegicus (Rat).